A 72-amino-acid chain; its full sequence is Translation initiation factor IF-1 (72 aa).

Residues 1-72 form the S1-like domain; that stretch reads MSKEEVLEFS…TKGRITYRYK (72 aa).

It belongs to the IF-1 family. In terms of assembly, component of the 30S ribosomal translation pre-initiation complex which assembles on the 30S ribosome in the order IF-2 and IF-3, IF-1 and N-formylmethionyl-tRNA(fMet); mRNA recruitment can occur at any time during PIC assembly.

It is found in the cytoplasm. In terms of biological role, one of the essential components for the initiation of protein synthesis. Stabilizes the binding of IF-2 and IF-3 on the 30S subunit to which N-formylmethionyl-tRNA(fMet) subsequently binds. Helps modulate mRNA selection, yielding the 30S pre-initiation complex (PIC). Upon addition of the 50S ribosomal subunit IF-1, IF-2 and IF-3 are released leaving the mature 70S translation initiation complex. The sequence is that of Translation initiation factor IF-1 from Bartonella bacilliformis (strain ATCC 35685 / KC583 / Herrer 020/F12,63).